The sequence spans 957 residues: Glycine dehydrogenase (decarboxylating) (957 aa).

Position 708 is an N6-(pyridoxal phosphate)lysine (Lys-708).

This sequence belongs to the GcvP family. In terms of assembly, the glycine cleavage system is composed of four proteins: P, T, L and H. Pyridoxal 5'-phosphate is required as a cofactor.

It catalyses the reaction N(6)-[(R)-lipoyl]-L-lysyl-[glycine-cleavage complex H protein] + glycine + H(+) = N(6)-[(R)-S(8)-aminomethyldihydrolipoyl]-L-lysyl-[glycine-cleavage complex H protein] + CO2. Its function is as follows. The glycine cleavage system catalyzes the degradation of glycine. The P protein binds the alpha-amino group of glycine through its pyridoxal phosphate cofactor; CO(2) is released and the remaining methylamine moiety is then transferred to the lipoamide cofactor of the H protein. The sequence is that of Glycine dehydrogenase (decarboxylating) from Escherichia fergusonii (strain ATCC 35469 / DSM 13698 / CCUG 18766 / IAM 14443 / JCM 21226 / LMG 7866 / NBRC 102419 / NCTC 12128 / CDC 0568-73).